Reading from the N-terminus, the 59-residue chain is Putative movement protein p6.6 (59 aa).

The chain crosses the membrane as a helical span at residues 13-35 (RVGPLLVLCLLLLLILFSRSWNV).

The protein localises to the membrane. In terms of biological role, cell-to-cell movement. The sequence is that of Putative movement protein p6.6 from Panicum mosaic virus (strain United States/Kansas 109S) (PMV).